The sequence spans 105 residues: Small cysteine and glycine repeat-containing protein 10 (105 aa).

The tract at residues 4–41 is 10 X 2 AA repeats of CG; that stretch reads CGCGGCGGRCSGGCGGGCGGGCGGGCGGGCGGCGGGCG.

It belongs to the KRTAP type 28 family.

Functionally, in the hair cortex, hair keratin intermediate filaments are embedded in an interfilamentous matrix, consisting of hair keratin-associated proteins (KRTAP), which are essential for the formation of a rigid and resistant hair shaft through their extensive disulfide bond cross-linking with abundant cysteine residues of hair keratins. The matrix proteins include the high-sulfur and high-glycine-tyrosine keratins. The sequence is that of Small cysteine and glycine repeat-containing protein 10 from Homo sapiens (Human).